We begin with the raw amino-acid sequence, 192 residues long: MAAEPEDNCISFVEMKFINNTLYFVAENDEDLESDYFGKLEPKLSIIRNLNDQVLFINQGHQAVFEDMPDSDCSDNAPQTVFIIYMYKDSLTRGLAVTISVQCKKMSTLSCKNKTLSFKEMSPPDNIDDEGNDIIFFQRSVPGHDDKIQFESSLYKGYFLACKKENDLFKLILKEKDECGDKSIMFTVQNKN.

Positions 1 to 35 are excised as a propeptide; that stretch reads MAAEPEDNCISFVEMKFINNTLYFVAENDEDLESD.

Belongs to the IL-1 family. In terms of assembly, forms a ternary complex with ligand-binding receptor subunit IL18R1 and signaling receptor subunit IL18RAP at the plasma membrane. Mature IL18 first binds to IL18R1 forming a low affinity binary complex, which then interacts with IL18RAP to form a high affinity ternary complex that signals inside the cell. Interacts with cargo receptor TMED10; the interaction mediates the translocation from the cytoplasm into the ERGIC (endoplasmic reticulum-Golgi intermediate compartment) and thereby secretion. The pro-IL-18 precursor is processed by CASP1, CASP4 or CASP5 to yield its mature, active form. The pro-IL-18 precursor features autoinhibitory interactions between the propeptide and the post-cleavage-site region, preventing recognition by the IL18R1 receptor. Processing by CASP1, CASP4 or CASP5 induces conformational changes to generate critical receptor-binding sites. The mature form is then secreted and released in the extracellular milieu by passing through the gasdermin-D (GSDMD) pore. In contrast, cleavage by CASP3 inactivates IL18.

The protein resides in the cytoplasm. It is found in the cytosol. It localises to the secreted. Its function is as follows. Pro-inflammatory cytokine primarily involved in epithelial barrier repair, polarized T-helper 1 (Th1) cell and natural killer (NK) cell immune responses. Upon binding to IL18R1 and IL18RAP, forms a signaling ternary complex which activates NF-kappa-B, triggering synthesis of inflammatory mediators. Synergizes with IL12/interleukin-12 to induce IFNG synthesis from T-helper 1 (Th1) cells and natural killer (NK) cells. Involved in transduction of inflammation downstream of pyroptosis: its mature form is specifically released in the extracellular milieu by passing through the gasdermin-D (GSDMD) pore. This chain is Interleukin-18 (IL18), found in Sus scrofa (Pig).